Consider the following 380-residue polypeptide: 4-hydroxy-3-methylbut-2-en-1-yl diphosphate synthase (flavodoxin) (380 aa).

C279, C282, C314, and E321 together coordinate [4Fe-4S] cluster.

This sequence belongs to the IspG family. Requires [4Fe-4S] cluster as cofactor.

The catalysed reaction is (2E)-4-hydroxy-3-methylbut-2-enyl diphosphate + oxidized [flavodoxin] + H2O + 2 H(+) = 2-C-methyl-D-erythritol 2,4-cyclic diphosphate + reduced [flavodoxin]. The protein operates within isoprenoid biosynthesis; isopentenyl diphosphate biosynthesis via DXP pathway; isopentenyl diphosphate from 1-deoxy-D-xylulose 5-phosphate: step 5/6. Its function is as follows. Converts 2C-methyl-D-erythritol 2,4-cyclodiphosphate (ME-2,4cPP) into 1-hydroxy-2-methyl-2-(E)-butenyl 4-diphosphate. In Tropheryma whipplei (strain TW08/27) (Whipple's bacillus), this protein is 4-hydroxy-3-methylbut-2-en-1-yl diphosphate synthase (flavodoxin).